Reading from the N-terminus, the 123-residue chain is uncharacterized protein (123 aa).

4 consecutive transmembrane segments (helical) span residues 9 to 31 (LLLR…WISF), 38 to 56 (VLTL…VFAV), 67 to 91 (VIAV…AALY), and 98 to 114 (VSIV…IISA).

The protein to E.coli YhgE.

The protein localises to the cell membrane. This is an uncharacterized protein from Bacillus subtilis (strain 168).